Reading from the N-terminus, the 89-residue chain is Class II hydrophobin 2 (89 aa).

Positions 1–15 (MKLYIAAALLTLGLA) are cleaved as a signal peptide. 4 cysteine pairs are disulfide-bonded: Cys34/Cys74, Cys45/Cys66, Cys46/Cys58, and Cys75/Cys86.

Belongs to the cerato-ulmin hydrophobin family. In terms of assembly, homodimer. Homodimers further self-assemble to form highly ordered films at water-air interfaces through intermolecular interactions.

The protein resides in the secreted. Its subcellular location is the cell wall. Its function is as follows. Aerial growth, conidiation, and dispersal of filamentous fungi in the environment rely upon a capability of their secreting small amphipathic proteins called hydrophobins (HPBs) with low sequence identity. Class I can self-assemble into an outermost layer of rodlet bundles on aerial cell surfaces, conferring cellular hydrophobicity that supports fungal growth, development and dispersal; whereas Class II form highly ordered films at water-air interfaces through intermolecular interactions but contribute nothing to the rodlet structure. The protein is Class II hydrophobin 2 of Trichoderma asperellum (strain ATCC 204424 / CBS 433.97 / NBRC 101777).